We begin with the raw amino-acid sequence, 96 residues long: Carboxysome shell protein CsoS1A (96 aa).

Residues 7–92 (ALGMIETRGL…PHKEVEPVLT (86 aa)) enclose the BMC domain.

It belongs to the bacterial microcompartments protein family. CsoS1 subfamily. As to quaternary structure, homohexamer with a small central pore. Forms a CsoS2-CsoS1-RuBisCO complex.

Its subcellular location is the carboxysome. Its function is as follows. One of shell proteins of the carboxysome, a polyhedral inclusion where RuBisCO (ribulose bisphosphate carboxylase, ccbL-ccbS) is sequestered. Assembles into hexamers which make sheets that form the facets of the polyhedral carboxysome. The shell probably limits the diffusion of CO(2) into and out of the carboxysome. In Hydrogenovibrio crunogenus (strain DSM 25203 / XCL-2) (Thiomicrospira crunogena), this protein is Carboxysome shell protein CsoS1A.